Consider the following 156-residue polypeptide: Endogenous retrovirus group K member 21 Pro protein (156 aa).

In terms of domain architecture, Peptidase A2 spans Phe21–Leu96. The active site involves Asp26. A G-patch domain is found at Tyr111–Phe156.

It belongs to the peptidase A2 family. HERV class-II K(HML-2) subfamily. Active as a homodimer. Autoproteolytically processed at the N-terminus. Expected C-terminal autoprocessing not detected. The sequence shown is that of the processed Pro protein.

The catalysed reaction is Processing at the authentic HIV-1 PR recognition site and release of the mature p17 matrix and the p24 capsid protein, as a result of the cleavage of the -SQNY-|-PIVQ- cleavage site.. In terms of biological role, retroviral proteases have roles in the processing of the primary translation products and the maturation of the viral particle. Endogenous Pro proteins may have kept, lost or modified their original function during evolution. The protein is Endogenous retrovirus group K member 21 Pro protein (ERVK-21) of Homo sapiens (Human).